The chain runs to 127 residues: Holo-[acyl-carrier-protein] synthase (127 aa).

Residues Asp9 and Glu58 each coordinate Mg(2+).

It belongs to the P-Pant transferase superfamily. AcpS family. It depends on Mg(2+) as a cofactor.

The protein resides in the cytoplasm. The catalysed reaction is apo-[ACP] + CoA = holo-[ACP] + adenosine 3',5'-bisphosphate + H(+). Transfers the 4'-phosphopantetheine moiety from coenzyme A to a Ser of acyl-carrier-protein. The polypeptide is Holo-[acyl-carrier-protein] synthase (Shewanella baltica (strain OS195)).